The following is a 1077-amino-acid chain: Response regulator SSK1 (1077 aa).

The region spanning 854–1000 (NVLIVEDNII…FLERKVMEWG (147 aa)) is the Response regulatory domain. Residue D903 is modified to 4-aspartylphosphate.

The protein belongs to the SSK1 family.

It localises to the cytoplasm. Two-domain response regulator protein in the two-component signal transduction system of the HOG1 pathway. Involved in multi-stress responses and is essential for conidiation, secondary metabolism, autophagy and endocyrosis. In addition, regulates mycelial growth, cell nucleus development, septum formation, and organelle development. Also regulates trap formation and thus plays a crucial role in pathogenicity. This chain is Response regulator SSK1, found in Arthrobotrys oligospora (strain ATCC 24927 / CBS 115.81 / DSM 1491) (Nematode-trapping fungus).